A 278-amino-acid polypeptide reads, in one-letter code: MSVPTVLQKILARKAEEVAERRARVNLAEVERLARSADAPRGFANALLERARRKEPAVIAEIKKASPSKGVLREHFVPAEIARSYEAGGAACLSVLTDVDFFQGADAYLKEARAACALPVIRKDFMIDPYQIVEARAIGADCILLIVSALDDMLMGELAATAKSVGLDVLVEVHDGAELERALKTLDTPLVGINNRNLHTFEVSLETTLDLLPEIPRDRLVVTESGILNRADVELMEVSEVYAFLVGEAFMRADDPGLELKRLFFQERGGVVLGADPD.

Belongs to the TrpC family.

The catalysed reaction is 1-(2-carboxyphenylamino)-1-deoxy-D-ribulose 5-phosphate + H(+) = (1S,2R)-1-C-(indol-3-yl)glycerol 3-phosphate + CO2 + H2O. It participates in amino-acid biosynthesis; L-tryptophan biosynthesis; L-tryptophan from chorismate: step 4/5. The sequence is that of Indole-3-glycerol phosphate synthase from Pseudomonas paraeruginosa (strain DSM 24068 / PA7) (Pseudomonas aeruginosa (strain PA7)).